Consider the following 115-residue polypeptide: uncharacterized protein (115 aa).

A compositionally biased stretch (basic residues) spans 90–100; that stretch reads THFGRPATRRR. The disordered stretch occupies residues 90 to 115; that stretch reads THFGRPATRRRPLGEREVNPSARSLG.

This is an uncharacterized protein from Saccharomyces cerevisiae (strain ATCC 204508 / S288c) (Baker's yeast).